A 209-amino-acid polypeptide reads, in one-letter code: Chaperone protein TorD (209 aa).

This sequence belongs to the TorD/DmsD family. TorD subfamily.

Its subcellular location is the cytoplasm. In terms of biological role, involved in the biogenesis of TorA. Acts on TorA before the insertion of the molybdenum cofactor and, as a result, probably favors a conformation of the apoenzyme that is competent for acquiring the cofactor. The polypeptide is Chaperone protein TorD (Shewanella baltica (strain OS185)).